The primary structure comprises 263 residues: Endonuclease 8 (263 aa).

The Schiff-base intermediate with DNA role is filled by proline 2. Glutamate 3 functions as the Proton donor in the catalytic mechanism. The active-site Proton donor; for beta-elimination activity is the lysine 53. The DNA site is built by glutamine 70, arginine 125, and asparagine 169. The FPG-type zinc finger occupies 229–263 (KVFHREGESCERCGGTIERTMLSSRPFYWCPHCQS). Arginine 253 acts as the Proton donor; for delta-elimination activity in catalysis.

Belongs to the FPG family. It depends on Zn(2+) as a cofactor.

The catalysed reaction is 2'-deoxyribonucleotide-(2'-deoxyribose 5'-phosphate)-2'-deoxyribonucleotide-DNA = a 3'-end 2'-deoxyribonucleotide-(2,3-dehydro-2,3-deoxyribose 5'-phosphate)-DNA + a 5'-end 5'-phospho-2'-deoxyribonucleoside-DNA + H(+). Functionally, involved in base excision repair of DNA damaged by oxidation or by mutagenic agents. Acts as a DNA glycosylase that recognizes and removes damaged bases. Has a preference for oxidized pyrimidines, such as thymine glycol, 5,6-dihydrouracil and 5,6-dihydrothymine. Has AP (apurinic/apyrimidinic) lyase activity and introduces nicks in the DNA strand. Cleaves the DNA backbone by beta-delta elimination to generate a single-strand break at the site of the removed base with both 3'- and 5'-phosphates. The sequence is that of Endonuclease 8 from Pectobacterium atrosepticum (strain SCRI 1043 / ATCC BAA-672) (Erwinia carotovora subsp. atroseptica).